The primary structure comprises 279 residues: Putative F-box protein At1g50880 (279 aa).

An F-box domain is found at 19-69 (SSSMSSIPLDVTSKILAKLPAKSVLRARCVSKQWSSISTDPYFISNMFPKQ).

The polypeptide is Putative F-box protein At1g50880 (Arabidopsis thaliana (Mouse-ear cress)).